The sequence spans 508 residues: Sugar transport protein 12 (508 aa).

At 1–22 (MPSVGIVIGDGKKEYPGKLTLY) the chain is on the cytoplasmic side. The next 12 helical transmembrane spans lie at 23-43 (VTVT…DIGI), 80-100 (VSLT…SLVA), 118-138 (VLFC…MLIV), 141-161 (LLLG…LSEM), 172-192 (IGFQ…NFFF), 201-221 (LSLG…LILP), 294-314 (LTGI…IGFG), 317-337 (AALI…VVSI), 347-367 (FLFL…AAAI), 383-403 (WYAI…AWSW), 426-446 (ITVS…LMML), and 451-471 (FGLF…VYLF). The Cytoplasmic portion of the chain corresponds to 472 to 508 (LPETRGVPIEEMNRVWRSHWYWSKFVDAEKNLTKVVI).

Belongs to the major facilitator superfamily. Sugar transporter (TC 2.A.1.1) family.

The protein resides in the membrane. Functionally, mediates an active uptake of hexoses, probably by sugar/hydrogen symport. This Arabidopsis thaliana (Mouse-ear cress) protein is Sugar transport protein 12 (STP12).